Reading from the N-terminus, the 1241-residue chain is uncharacterized protein (1241 aa).

Positions 21 to 49 form a coiled coil; sequence ILNDNVREINIAKKEIKQLREYVGILQQN. The next 3 membrane-spanning stretches (helical) occupy residues 261–281, 918–938, and 947–967; these read VNAI…FVLG, AVVG…GLVA, and GHIV…VIGG. The disordered stretch occupies residues 1005–1028; it reads THIGKEDSNNGVSTSTNKRSIGKA. Positions 1013–1028 are enriched in polar residues; the sequence is NNGVSTSTNKRSIGKA.

The protein resides in the host membrane. This is an uncharacterized protein from Diadromus pulchellus (Parasitic wasp).